A 418-amino-acid polypeptide reads, in one-letter code: Dwarfin sma-2 (418 aa).

One can recognise an MH1 domain in the interval Lys8–Leu134. Zn(2+) is bound by residues Cys62, Cys107, Cys119, and His124. The region spanning Trp222–Ser418 is the MH2 domain.

Belongs to the dwarfin/SMAD family.

The protein resides in the cytoplasm. It is found in the nucleus. Its function is as follows. Involved in TGF-beta pathway. Plays a role in male tail tip morphogenesis. This is Dwarfin sma-2 from Caenorhabditis elegans.